The chain runs to 340 residues: Dihydroorotate dehydrogenase (quinone) (340 aa).

FMN-binding positions include 65–69 and threonine 89; that span reads AGADK. Lysine 69 is a substrate binding site. 114-118 is a binding site for substrate; the sequence is NRNGF. The FMN site is built by asparagine 142 and asparagine 175. Substrate is bound at residue asparagine 175. The active-site Nucleophile is serine 178. Asparagine 180 lines the substrate pocket. FMN contacts are provided by lysine 220 and threonine 248. A substrate-binding site is contributed by 249 to 250; it reads NT. FMN is bound by residues glycine 271, glycine 300, and 321–322; that span reads YS.

The protein belongs to the dihydroorotate dehydrogenase family. Type 2 subfamily. As to quaternary structure, monomer. It depends on FMN as a cofactor.

The protein resides in the cell membrane. The enzyme catalyses (S)-dihydroorotate + a quinone = orotate + a quinol. It participates in pyrimidine metabolism; UMP biosynthesis via de novo pathway; orotate from (S)-dihydroorotate (quinone route): step 1/1. Catalyzes the conversion of dihydroorotate to orotate with quinone as electron acceptor. The protein is Dihydroorotate dehydrogenase (quinone) of Mannheimia succiniciproducens (strain KCTC 0769BP / MBEL55E).